We begin with the raw amino-acid sequence, 653 residues long: Extracellular metalloproteinase (653 aa).

An N-terminal signal peptide occupies residues 1 to 19 (MRSFLLASLASLSVISVYG). The propeptide occupies 20–244 (HPHARSTLTR…VHAVVDYSAD (225 aa)). N-linked (GlcNAc...) asparagine glycosylation is found at Asn327, Asn336, and Asn412. Residue His429 coordinates Zn(2+). Residue Glu430 is part of the active site. Residue His433 coordinates Zn(2+). Residues Asn636 and Asn637 are each glycosylated (N-linked (GlcNAc...) asparagine).

Belongs to the peptidase M36 family. The cofactor is Zn(2+).

The protein resides in the secreted. Functionally, secreted metalloproteinase that allows assimilation of proteinaceous substrates. This Pyrenophora tritici-repentis (strain Pt-1C-BFP) (Wheat tan spot fungus) protein is Extracellular metalloproteinase (MEP).